Reading from the N-terminus, the 333-residue chain is N-acetyl-gamma-glutamyl-phosphate reductase (333 aa).

The active site involves cysteine 145.

This sequence belongs to the NAGSA dehydrogenase family. Type 1 subfamily.

The protein resides in the cytoplasm. It carries out the reaction N-acetyl-L-glutamate 5-semialdehyde + phosphate + NADP(+) = N-acetyl-L-glutamyl 5-phosphate + NADPH + H(+). It participates in amino-acid biosynthesis; L-arginine biosynthesis; N(2)-acetyl-L-ornithine from L-glutamate: step 3/4. Catalyzes the NADPH-dependent reduction of N-acetyl-5-glutamyl phosphate to yield N-acetyl-L-glutamate 5-semialdehyde. The chain is N-acetyl-gamma-glutamyl-phosphate reductase from Salinispora tropica (strain ATCC BAA-916 / DSM 44818 / JCM 13857 / NBRC 105044 / CNB-440).